The following is a 464-amino-acid chain: Glucan 1,3-beta-glucosidase 3 (464 aa).

Belongs to the glycosyl hydrolase 5 (cellulase A) family.

It catalyses the reaction Successive hydrolysis of beta-D-glucose units from the non-reducing ends of (1-&gt;3)-beta-D-glucans, releasing alpha-glucose.. This is Glucan 1,3-beta-glucosidase 3 (exg3) from Schizosaccharomyces pombe (strain 972 / ATCC 24843) (Fission yeast).